Reading from the N-terminus, the 260-residue chain is 3'-5' ssDNA/RNA exonuclease TatD (260 aa).

E91, H127, and H152 together coordinate a divalent metal cation.

This sequence belongs to the metallo-dependent hydrolases superfamily. TatD-type hydrolase family. TatD subfamily. As to quaternary structure, monomer. The cofactor is Mg(2+).

Its subcellular location is the cytoplasm. 3'-5' exonuclease that prefers single-stranded DNA and RNA. May play a role in the H(2)O(2)-induced DNA damage repair. In Salmonella typhimurium (strain LT2 / SGSC1412 / ATCC 700720), this protein is 3'-5' ssDNA/RNA exonuclease TatD.